The chain runs to 341 residues: MFRSMIVRSASPVKQGLLRRGFASESVPDRKVVILGAAGGIGQPLSLLMKLNPLVSSLSLYDIANTPGVAADVGHINTRSQVSGYMGDDDLGKALEGADLVIIPAGVPRKPGMTRDDLFNINAGIVKNLSIAIAKYCPQALVNMISNPVNSTVPIAAEIFKKAGTYDEKKLFGVTTLDVVRARTFYAGKSDVNVAEVNVPVVGGHAGITILPLFSQASPQANLSDDLIRALTKRTQDGGTEVVEAKAGKGSATLSMAYAGALFADACLKGLNGVPNVVECSFVQSTITELPFFASKVRLGKNGVEEVLDLGPLSDFEKEGLEALKAELKSSIEKGIKFANQ.

Residues 1 to 22 (MFRSMIVRSASPVKQGLLRRGF) constitute a mitochondrion transit peptide. Residues 36–42 (GAAGGIG) and Asp-62 contribute to the NAD(+) site. Residues Arg-109 and Arg-115 each contribute to the substrate site. Residues Asn-122 and 145–147 (ISN) contribute to the NAD(+) site. Residues Asn-147 and Arg-181 each coordinate substrate. The active-site Proton acceptor is His-205. Residue Met-256 coordinates NAD(+).

The protein belongs to the LDH/MDH superfamily. MDH type 1 family. Homodimer. In terms of tissue distribution, expressed in rosette leaves at low levels.

The protein resides in the mitochondrion matrix. It catalyses the reaction (S)-malate + NAD(+) = oxaloacetate + NADH + H(+). In terms of biological role, catalyzes a reversible NAD-dependent dehydrogenase reaction involved in central metabolism and redox homeostasis between organelle compartments. Required for carbon dioxide and energy partitioning in leaves. May limit photorespiration during the dark phase. Can convert 2-ketoglutarate to L-2-hydroxyglutarate in vitro. The polypeptide is Malate dehydrogenase 2, mitochondrial (Arabidopsis thaliana (Mouse-ear cress)).